Reading from the N-terminus, the 1940-residue chain is Myosin-3 (1940 aa).

Residues 33-82 (DAKTYCFVVDSKEEYVKGKIKSSQDGKVTVETEDSRTLVVKPEDVYAMNP) enclose the Myosin N-terminal SH3-like domain. In terms of domain architecture, Myosin motor spans 86–779 (DKIEDMAMLT…LLGTLEEMRD (694 aa)). Lysine 130 carries the post-translational modification N6,N6,N6-trimethyllysine. Residue 179 to 186 (GESGAGKT) coordinates ATP. Actin-binding stretches follow at residues 656 to 678 (LNKL…IPNE) and 758 to 772 (KFGH…GLLG). Residues 782 to 811 (LAKLITRTQAVCRGFLMRVEFQKMMQRRES) form the IQ domain. Residues 841–1928 (LKSAETEKEM…NKLRAKTRDF (1088 aa)) adopt a coiled-coil conformation. The tract at residues 1260 to 1289 (ARGKNEEMQRSLSELTTQKSRLQTEAGELS) is disordered. Residues 1269–1282 (RSLSELTTQKSRLQ) are compositionally biased toward polar residues.

The protein belongs to the TRAFAC class myosin-kinesin ATPase superfamily. Myosin family. Muscle myosin is a hexameric protein that consists of 2 heavy chain subunits (MHC), 2 alkali light chain subunits (MLC) and 2 regulatory light chain subunits (MLC-2).

It localises to the cytoplasm. Its subcellular location is the myofibril. Its function is as follows. Muscle contraction. This is Myosin-3 (Myh3) from Mus musculus (Mouse).